Consider the following 482-residue polypeptide: Bile acid receptor (482 aa).

A Glycyl lysine isopeptide (Lys-Gly) (interchain with G-Cter in SUMO1) cross-link involves residue K132. The segment at residues 134-209 (DELCVVCGDR…MGMLAECLLT (76 aa)) is a DNA-binding region (nuclear receptor). The NR C4-type zinc-finger motif lies at 137–157 (CVVCGDRASGYHYNALTCEGC). Phosphoserine; by PKC/PRKCA occurs at positions 145 and 164. N6-acetyllysine; by EP300 is present on K167. The NR C4-type zinc-finger motif lies at 173-197 (CKNGGNCVMDMYMRRKCQECRLRKC). At K216 the chain carries N6-methyllysine; by SETD7. Position 223 is an N6-acetyllysine; by EP300 (K223). Basic and acidic residues predominate over residues 229-240 (AIHEDSEGRDLR). The disordered stretch occupies residues 229 to 253 (AIHEDSEGRDLRQVTSTTKSCREKT). Residues 258–482 (DQQNLLHYIM…PLLCEIWDVQ (225 aa)) form the NR LBD domain. A Glycyl lysine isopeptide (Lys-Gly) (interchain with G-Cter in SUMO1) cross-link involves residue K285. Chenodeoxycholate-binding residues include R341, Y371, and Y379. T452 carries the post-translational modification Phosphothreonine; by PKC/PRKCZ. A chenodeoxycholate-binding site is contributed by H457.

It belongs to the nuclear hormone receptor family. NR1 subfamily. As to quaternary structure, heterodimer with RXRA; the heterodimerization enhances the binding affinity for LXXLL motifs from coactivators. Binds DNA predominantly as a heterodimer with RXRA. After activation by agonist binding interacts with coactivators. Interacts with NCOA1, NCOA2, PPARGC1A, CARM1, SETD7, PRMT1, GPS2, SMARCA4 and MED1, EP300 and SMARCD1. Interacts with XRCC5 and XRCC6; decreasing NR1H4/FXR transactivation activity towards ABCB11/BSEP. Interacts with PAGR1 AND NCOA6; indicative for an association with an MLL2/MLL3 complex (ASCOM). Acetylated by EP300. Lys-223 as is the major acetylation site for EP300; the dynamicly regulated acetylation inhibits heterodimerization with RXRA and transactivation activity. Deacetylated by SIRT1. Post-translationally, methylation may increase transactivation of target genes. In terms of processing, phosphorylation by PKC/PRKCA increases transactivation activity by promoting association with PPARGC1A. Sumoylated upon ligand binding.

It localises to the nucleus. Ligand-activated transcription factor. Receptor for bile acids (BAs) such as chenodeoxycholic acid (CDCA), lithocholic acid, deoxycholic acid (DCA) and allocholic acid (ACA). Plays a essential role in BA homeostasis through the regulation of genes involved in BA synthesis, conjugation and enterohepatic circulation. Also regulates lipid and glucose homeostasis and is involved innate immune response. The FXR-RXR heterodimer binds predominantly to farnesoid X receptor response elements (FXREs) containing two inverted repeats of the consensus sequence 5'-AGGTCA-3' in which the monomers are spaced by 1 nucleotide (IR-1) but also to tandem repeat DR1 sites with lower affinity, and can be activated by either FXR or RXR-specific ligands. It is proposed that monomeric nuclear receptors such as NR5A2/LRH-1 bound to coregulatory nuclear responsive element (NRE) halfsites located in close proximity to FXREs modulate transcriptional activity. In the liver activates transcription of the corepressor NR0B2 thereby indirectly inhibiting CYP7A1 and CYP8B1 (involved in BA synthesis) implicating at least in part histone demethylase KDM1A resulting in epigenomic repression, and SLC10A1/NTCP (involved in hepatic uptake of conjugated BAs). Activates transcription of the repressor MAFG (involved in regulation of BA synthesis). Activates transcription of SLC27A5/BACS and BAAT (involved in BA conjugation), ABCB11/BSEP (involved in bile salt export) by directly recruiting histone methyltransferase CARM1, and ABCC2/MRP2 (involved in secretion of conjugated BAs) and ABCB4 (involved in secretion of phosphatidylcholine in the small intestine). Activates transcription of SLC27A5/BACS and BAAT (involved in BA conjugation), ABCB11/BSEP (involved in bile salt export) by directly recruiting histone methyltransferase CARM1, and ABCC2/MRP2 (involved in secretion of conjugated BAs) and ABCB4 (involved in secretion of phosphatidylcholine in the small intestine). In the intestine activates FGF19 expression and secretion leading to hepatic CYP7A1 repression. The function also involves the coordinated induction of hepatic KLB/beta-klotho expression. Regulates transcription of liver UGT2B4 and SULT2A1 involved in BA detoxification; binding to the UGT2B4 promoter seems to imply a monomeric transactivation independent of RXRA. Modulates lipid homeostasis by activating liver NR0B2/SHP-mediated repression of SREBF1 (involved in de novo lipogenesis), expression of PLTP (involved in HDL formation), SCARB1 (involved in HDL hepatic uptake), APOE, APOC1, APOC4, PPARA (involved in beta-oxidation of fatty acids), VLDLR and SDC1 (involved in the hepatic uptake of LDL and IDL remnants), and inhibiting expression of MTTP (involved in VLDL assembly). Increases expression of APOC2 (promoting lipoprotein lipase activity implicated in triglyceride clearance). Transrepresses APOA1 involving a monomeric competition with NR2A1 for binding to a DR1 element. Also reduces triglyceride clearance by inhibiting expression of ANGPTL3 and APOC3 (both involved in inhibition of lipoprotein lipase). Involved in glucose homeostasis by modulating hepatic gluconeogenesis through activation of NR0B2/SHP-mediated repression of respective genes. Modulates glycogen synthesis (inducing phosphorylation of glycogen synthase kinase-3). Modulates glucose-stimulated insulin secretion and is involved in insulin resistance. Involved in intestinal innate immunity. Plays a role in protecting the distal small intestine against bacterial overgrowth and preservation of the epithelial barrier. Down-regulates inflammatory cytokine expression in several types of immune cells including macrophages and mononuclear cells. Mediates trans-repression of TLR4-induced cytokine expression; the function seems to require its sumoylation and prevents N-CoR nuclear receptor corepressor clearance from target genes such as IL1B and NOS2. Involved in the TLR9-mediated protective mechanism in intestinal inflammation. Plays an anti-inflammatory role in liver inflammation; proposed to inhibit pro-inflammatory (but not antiapoptotic) NF-kappa-B signaling. This chain is Bile acid receptor (NR1H4), found in Bos taurus (Bovine).